A 356-amino-acid polypeptide reads, in one-letter code: tRNA pseudouridine synthase D (356 aa).

Catalysis depends on Asp-84, which acts as the Nucleophile. Positions 159–302 (GVPNYYGPQR…RRGARRPIRV (144 aa)) constitute a TRUD domain.

It belongs to the pseudouridine synthase TruD family.

The catalysed reaction is uridine(13) in tRNA = pseudouridine(13) in tRNA. In terms of biological role, responsible for synthesis of pseudouridine from uracil-13 in transfer RNAs. This Thermus thermophilus (strain ATCC BAA-163 / DSM 7039 / HB27) protein is tRNA pseudouridine synthase D.